Consider the following 308-residue polypeptide: Probable 5-dehydro-4-deoxyglucarate dehydratase (308 aa).

This sequence belongs to the DapA family.

It catalyses the reaction 5-dehydro-4-deoxy-D-glucarate + H(+) = 2,5-dioxopentanoate + CO2 + H2O. It functions in the pathway carbohydrate acid metabolism; D-glucarate degradation; 2,5-dioxopentanoate from D-glucarate: step 2/2. The polypeptide is Probable 5-dehydro-4-deoxyglucarate dehydratase (Bacillus licheniformis (strain ATCC 14580 / DSM 13 / JCM 2505 / CCUG 7422 / NBRC 12200 / NCIMB 9375 / NCTC 10341 / NRRL NRS-1264 / Gibson 46)).